The chain runs to 218 residues: Octanoyltransferase (218 aa).

Residues 32–218 form the BPL/LPL catalytic domain; sequence GEAAEAIWLL…LRTFPQHFPD (187 aa). Substrate contacts are provided by residues 71–78, 151–153, and 164–166; these read RGGQYTYH, AIG, and GLS. The Acyl-thioester intermediate role is filled by Cys182.

This sequence belongs to the LipB family.

It is found in the cytoplasm. The enzyme catalyses octanoyl-[ACP] + L-lysyl-[protein] = N(6)-octanoyl-L-lysyl-[protein] + holo-[ACP] + H(+). It functions in the pathway protein modification; protein lipoylation via endogenous pathway; protein N(6)-(lipoyl)lysine from octanoyl-[acyl-carrier-protein]: step 1/2. Functionally, catalyzes the transfer of endogenously produced octanoic acid from octanoyl-acyl-carrier-protein onto the lipoyl domains of lipoate-dependent enzymes. Lipoyl-ACP can also act as a substrate although octanoyl-ACP is likely to be the physiological substrate. In Cereibacter sphaeroides (strain ATCC 17029 / ATH 2.4.9) (Rhodobacter sphaeroides), this protein is Octanoyltransferase.